Consider the following 436-residue polypeptide: uncharacterized protein (436 aa).

This is an uncharacterized protein from Arabidopsis thaliana (Mouse-ear cress).